The following is a 441-amino-acid chain: Growth/differentiation factor 9 (441 aa).

The first 29 residues, 1–29, serve as a signal peptide directing secretion; it reads MALPSNFLLGVCCFAWLCFLSSLSSQAST. Residues 30-306 constitute a propeptide that is removed on maturation; that stretch reads EESQSGASEN…EVERSPRRRR (277 aa). Residues asparagine 163, asparagine 229, asparagine 258, and asparagine 325 are each glycosylated (N-linked (GlcNAc...) asparagine). Disulfide bonds link cysteine 340–cysteine 406, cysteine 369–cysteine 438, and cysteine 373–cysteine 440.

This sequence belongs to the TGF-beta family. In terms of assembly, homodimer or heterodimer (Potential). But, in contrast to other members of this family, cannot be disulfide-linked. Phosphorylated; phosphorylation is critical for GDF9 function. In terms of tissue distribution, ovary. Strongly expressed in germinal vesicle (GV) stage oocytes, MII-stage oocytes and in zygotes.

The protein resides in the secreted. Required for ovarian folliculogenesis. The protein is Growth/differentiation factor 9 (Gdf9) of Mus musculus (Mouse).